The chain runs to 582 residues: Spermatogenesis-associated protein 7 homolog (582 aa).

2 disordered regions span residues 167 to 192 and 251 to 289; these read LMSG…CDRR and RKDF…EVNI. Polar residues-rich tracts occupy residues 169–181 and 262–274; these read SGTQ…SPSR and ETQT…NSEL.

As to quaternary structure, found in a complex with CFAP410, NEK1 and SPATA7. Interacts with NEK1. Interacts with RPGRIP1. Interacts with RPGR. Interacts with NPHP4. Interacts with NPHP1. Interacts with AHI1. Expressed in the retina (at protein level). Expressed in the choroid region and retinal pigment endothelium, within the photoreceptor layer (at protein level).

The protein resides in the cytoplasm. Its subcellular location is the cytoskeleton. The protein localises to the cilium axoneme. It is found in the cilium basal body. It localises to the cell projection. The protein resides in the cilium. Its subcellular location is the photoreceptor outer segment. In terms of biological role, involved in the maintenance of both rod and cone photoreceptor cells. Required for photoreceptor-specific localization of proximal connecting cilium (CC) proteins RPGR, AHI1, NPHP1, NPHP4, and RPGRIP1 at the distal CC, a photoreceptor-specific extension of the primary cilium transition zone. Maintenance of protein localization at the photoreceptor-specific distal CC is essential for normal microtubule stability and to prevent photoreceptor degeneration. The protein is Spermatogenesis-associated protein 7 homolog (Spata7) of Mus musculus (Mouse).